A 229-amino-acid chain; its full sequence is Orotate phosphoribosyltransferase (229 aa).

Residues Arg-107, Lys-108, Lys-111, His-113, and 133–141 (EDLTTAGGS) contribute to the 5-phospho-alpha-D-ribose 1-diphosphate site. Position 137 (Thr-137) interacts with orotate.

The protein belongs to the purine/pyrimidine phosphoribosyltransferase family. PyrE subfamily. In terms of assembly, homodimer. Requires Mg(2+) as cofactor.

The enzyme catalyses orotidine 5'-phosphate + diphosphate = orotate + 5-phospho-alpha-D-ribose 1-diphosphate. The protein operates within pyrimidine metabolism; UMP biosynthesis via de novo pathway; UMP from orotate: step 1/2. In terms of biological role, catalyzes the transfer of a ribosyl phosphate group from 5-phosphoribose 1-diphosphate to orotate, leading to the formation of orotidine monophosphate (OMP). This is Orotate phosphoribosyltransferase from Rhizobium johnstonii (strain DSM 114642 / LMG 32736 / 3841) (Rhizobium leguminosarum bv. viciae).